Here is a 1131-residue protein sequence, read N- to C-terminus: DNA polymerase II large subunit (1131 aa).

Belongs to the archaeal DNA polymerase II family. In terms of assembly, heterodimer of a large subunit and a small subunit.

It catalyses the reaction DNA(n) + a 2'-deoxyribonucleoside 5'-triphosphate = DNA(n+1) + diphosphate. The catalysed reaction is Exonucleolytic cleavage in the 3'- to 5'-direction to yield nucleoside 5'-phosphates.. In terms of biological role, possesses two activities: a DNA synthesis (polymerase) and an exonucleolytic activity that degrades single-stranded DNA in the 3'- to 5'-direction. Has a template-primer preference which is characteristic of a replicative DNA polymerase. The polypeptide is DNA polymerase II large subunit (Methanococcus vannielii (strain ATCC 35089 / DSM 1224 / JCM 13029 / OCM 148 / SB)).